Consider the following 460-residue polypeptide: Argininosuccinate lyase (460 aa).

The protein belongs to the lyase 1 family. Argininosuccinate lyase subfamily.

Its subcellular location is the cytoplasm. The enzyme catalyses 2-(N(omega)-L-arginino)succinate = fumarate + L-arginine. It functions in the pathway amino-acid biosynthesis; L-arginine biosynthesis; L-arginine from L-ornithine and carbamoyl phosphate: step 3/3. This chain is Argininosuccinate lyase, found in Solibacter usitatus (strain Ellin6076).